Consider the following 177-residue polypeptide: NAD(P)H-quinone oxidoreductase subunit 6, chloroplastic (177 aa).

A run of 5 helical transmembrane segments spans residues 10–30 (FLLV…VLLT), 32–52 (PIFS…FYTP), 61–81 (AQLL…VMFM), 92–112 (LWTV…VSLI), and 152–172 (FFLP…GAIS).

It belongs to the complex I subunit 6 family. As to quaternary structure, NDH is composed of at least 16 different subunits, 5 of which are encoded in the nucleus.

It is found in the plastid. The protein resides in the chloroplast thylakoid membrane. It catalyses the reaction a plastoquinone + NADH + (n+1) H(+)(in) = a plastoquinol + NAD(+) + n H(+)(out). The catalysed reaction is a plastoquinone + NADPH + (n+1) H(+)(in) = a plastoquinol + NADP(+) + n H(+)(out). Its function is as follows. NDH shuttles electrons from NAD(P)H:plastoquinone, via FMN and iron-sulfur (Fe-S) centers, to quinones in the photosynthetic chain and possibly in a chloroplast respiratory chain. The immediate electron acceptor for the enzyme in this species is believed to be plastoquinone. Couples the redox reaction to proton translocation, and thus conserves the redox energy in a proton gradient. This Ranunculus macranthus (Large buttercup) protein is NAD(P)H-quinone oxidoreductase subunit 6, chloroplastic (ndhG).